We begin with the raw amino-acid sequence, 156 residues long: Deoxyuridine 5'-triphosphate nucleotidohydrolase (156 aa).

Substrate-binding positions include 76–78 (RSG), Asn89, 93–95 (TVD), and Lys103.

This sequence belongs to the dUTPase family. Requires Mg(2+) as cofactor.

The catalysed reaction is dUTP + H2O = dUMP + diphosphate + H(+). Its pathway is pyrimidine metabolism; dUMP biosynthesis; dUMP from dCTP (dUTP route): step 2/2. Its function is as follows. This enzyme is involved in nucleotide metabolism: it produces dUMP, the immediate precursor of thymidine nucleotides and it decreases the intracellular concentration of dUTP so that uracil cannot be incorporated into DNA. The sequence is that of Deoxyuridine 5'-triphosphate nucleotidohydrolase from Rhizobium etli (strain CIAT 652).